A 530-amino-acid chain; its full sequence is Probable serine/threonine-protein kinase fnkB (530 aa).

Residues 11 to 268 enclose the Protein kinase domain; it reads WEIVETLKSN…SITLIDHPFL (258 aa). ATP contacts are provided by residues 17 to 25 and Lys43; that span reads LKSNVFKVN. Asp131 functions as the Proton acceptor in the catalytic mechanism.

This sequence belongs to the protein kinase superfamily. STE Ser/Thr protein kinase family. The cofactor is Mg(2+).

The catalysed reaction is L-seryl-[protein] + ATP = O-phospho-L-seryl-[protein] + ADP + H(+). The enzyme catalyses L-threonyl-[protein] + ATP = O-phospho-L-threonyl-[protein] + ADP + H(+). This is Probable serine/threonine-protein kinase fnkB from Dictyostelium discoideum (Social amoeba).